Reading from the N-terminus, the 244-residue chain is Coenzyme Q-binding protein COQ10 homolog B, mitochondrial (244 aa).

This sequence belongs to the COQ10 family. As to quaternary structure, interacts with coenzyme Q.

Its subcellular location is the mitochondrion inner membrane. Required for the function of coenzyme Q in the respiratory chain. May serve as a chaperone or may be involved in the transport of Q6 from its site of synthesis to the catalytic sites of the respiratory complexes. In Xenopus laevis (African clawed frog), this protein is Coenzyme Q-binding protein COQ10 homolog B, mitochondrial (coq10b).